The sequence spans 810 residues: Zinc finger CCCH domain-containing protein 11A (810 aa).

C3H1-type zinc fingers lie at residues 2 to 29, 31 to 57, and 60 to 86; these read PNQG…HCEA, IGNE…HMEI, and KRSE…HHNR. Phosphoserine is present on serine 108. Residues lysine 114 and lysine 124 each participate in a glycyl lysine isopeptide (Lys-Gly) (interchain with G-Cter in SUMO2) cross-link. Serine 132 is subject to Phosphoserine. Disordered stretches follow at residues 139–194, 223–258, 285–351, and 367–432; these read MKVE…GLRV, KKMK…ENVR, GKRK…DKVN, and ERAS…TTCI. Lysine 140 is covalently cross-linked (Glycyl lysine isopeptide (Lys-Gly) (interchain with G-Cter in SUMO2)). Phosphoserine occurs at positions 149 and 171. A compositionally biased stretch (acidic residues) spans 160–175; that stretch reads ADDDEDDDDQFSEEGD. Serine 290 bears the Phosphoserine mark. Basic and acidic residues-rich tracts occupy residues 309 to 322 and 367 to 390; these read KKVE…DKTP and ERAS…KTDD. Threonine 321 is subject to Phosphothreonine. The stretch at 362-423 forms a coiled coil; sequence EEILLERASQ…KHRQQEAERQ (62 aa). Phosphoserine is present on serine 370. A compositionally biased stretch (polar residues) spans 391-402; the sequence is STSGARSSSTIR. A compositionally biased stretch (basic and acidic residues) spans 417–432; that stretch reads QQEAERQKSKKDTTCI. A Glycyl lysine isopeptide (Lys-Gly) (interchain with G-Cter in SUMO2) cross-link involves residue lysine 478. The disordered stretch occupies residues 482 to 549; the sequence is ALRVQQSSES…KEASGETTGV (68 aa). Over residues 486–498 the composition is skewed to low complexity; sequence QQSSESSTSSPSQ. Lysine 619 is covalently cross-linked (Glycyl lysine isopeptide (Lys-Gly) (interchain with G-Cter in SUMO2)). A disordered region spans residues 715–768; the sequence is TVPEAENPRDSLVLPPTQSSSDSSPPEVSGPSSSQMSMKTRRLSSASTGKPPLS. Positions 729 to 748 are enriched in low complexity; the sequence is PPTQSSSDSSPPEVSGPSSS. A compositionally biased stretch (polar residues) spans 749–762; the sequence is QMSMKTRRLSSAST.

As to quaternary structure, interacts with TREX complex components THOC2, DDX39 and POLDIP3; the interactions are ATP-dependent. Interacts with PABPN1; this interaction retains ZC3H11A in nuclear speckles. Interacts with KPNA3.

The protein localises to the nucleus. Its subcellular location is the nucleus speckle. In terms of biological role, through its association with TREX complex components, may participate in the export and post-transcriptional coordination of selected mRNA transcripts, including those required to maintain the metabolic processes in embryonic cells. Binds RNA. Functionally, (Microbial infection) Plays a role in efficient growth of several nuclear-replicating viruses such as HIV-1, influenza virus or herpes simplex virus 1/HHV-1. Required for efficient viral mRNA export. May be required for proper polyadenylation of adenovirus type 5/HAdV-5 capsid mRNA. The sequence is that of Zinc finger CCCH domain-containing protein 11A (ZC3H11A) from Homo sapiens (Human).